The chain runs to 159 residues: Ecotin (159 aa).

Positions 1-22 are cleaved as a signal peptide; sequence MRPTPMTAILALSLAAAAPAMA. Cys68 and Cys105 form a disulfide bridge.

It belongs to the protease inhibitor I11 (ecotin) family. As to quaternary structure, homodimer.

The protein resides in the periplasm. In terms of biological role, general inhibitor of family S1 serine proteases. In Pseudomonas putida (strain ATCC 700007 / DSM 6899 / JCM 31910 / BCRC 17059 / LMG 24140 / F1), this protein is Ecotin.